The primary structure comprises 382 residues: ATP phosphoribosyltransferase regulatory subunit (382 aa).

The protein belongs to the class-II aminoacyl-tRNA synthetase family. HisZ subfamily. In terms of assembly, heteromultimer composed of HisG and HisZ subunits.

Its subcellular location is the cytoplasm. Its pathway is amino-acid biosynthesis; L-histidine biosynthesis; L-histidine from 5-phospho-alpha-D-ribose 1-diphosphate: step 1/9. Its function is as follows. Required for the first step of histidine biosynthesis. May allow the feedback regulation of ATP phosphoribosyltransferase activity by histidine. The polypeptide is ATP phosphoribosyltransferase regulatory subunit (Burkholderia vietnamiensis (strain G4 / LMG 22486) (Burkholderia cepacia (strain R1808))).